Consider the following 690-residue polypeptide: Protein MODIFIED TRANSPORT TO THE VACUOLE 1 (690 aa).

The 131-residue stretch at 20-150 folds into the VHS domain; sequence VTSDEDKVAP…PESINRRIEG (131 aa). 2 disordered regions span residues 228-258 and 518-551; these read DGNYGTSKNTTGGSWGHASGEASESSASVRV and FSIDENNSNQKGSSSSTLPQDLFAMPSTTSHQAP. Low complexity predominate over residues 243-257; that stretch reads GHASGEASESSASVR. Positions 520 to 536 are enriched in polar residues; the sequence is IDENNSNQKGSSSSTLP.

As to quaternary structure, binds to clathrin heavy chain. As to expression, expressed in inflorescence stems, stigmas, roots, roots meristems, embryos, and floral and leaf vasculatures, but absent from the floral abscission zone.

It localises to the golgi apparatus. The protein localises to the trans-Golgi network. It is found in the cytoplasmic vesicle. The protein resides in the clathrin-coated vesicle. Mediates clathrin-dependent trafficking of vacuolar cargo from the trans-Golgi network (TGN). Promotes plant growth. In Arabidopsis thaliana (Mouse-ear cress), this protein is Protein MODIFIED TRANSPORT TO THE VACUOLE 1.